The primary structure comprises 484 residues: Glutamate--tRNA ligase (484 aa).

The 'HIGH' region signature appears at 11–21 (PSPTGYLHIGN). A 'KMSKS' region motif is present at residues 252–256 (KLSKR). Lys255 contacts ATP.

The protein belongs to the class-I aminoacyl-tRNA synthetase family. Glutamate--tRNA ligase type 1 subfamily. Monomer.

It localises to the cytoplasm. It carries out the reaction tRNA(Glu) + L-glutamate + ATP = L-glutamyl-tRNA(Glu) + AMP + diphosphate. Its function is as follows. Catalyzes the attachment of glutamate to tRNA(Glu) in a two-step reaction: glutamate is first activated by ATP to form Glu-AMP and then transferred to the acceptor end of tRNA(Glu). This Staphylococcus aureus (strain bovine RF122 / ET3-1) protein is Glutamate--tRNA ligase.